Consider the following 875-residue polypeptide: Serrate RNA effector molecule homolog (875 aa).

Positions 1–90 (MGDSDDEYDR…RRDWDEHSSD (90 aa)) are disordered. Glycine 2 carries the N-acetylglycine modification. Serine 4 bears the Phosphoserine mark. The residue at position 8 (tyrosine 8) is a Phosphotyrosine. Residues 8 to 73 (YDRRRRDKFR…ERFSPPRHEL (66 aa)) are compositionally biased toward basic and acidic residues. Residues serine 67, serine 74, and serine 136 each carry the phosphoserine modification. Lysine 150 is covalently cross-linked (Glycyl lysine isopeptide (Lys-Gly) (interchain with G-Cter in SUMO2)). The interval 272-411 (EEEEQAGKTG…KPKDAAGLEC (140 aa)) is disordered. Basic and acidic residues predominate over residues 297–345 (EGERKANDKDEKKEDGKQAENDSSNDDKTKKSEGDGDKEEKKEEAEKEA). Positions 369 to 386 (SESESEGGQAEEEKEEAE) are enriched in acidic residues. Basic and acidic residues predominate over residues 387-411 (EALKEKEKPKEEEKEKPKDAAGLEC). Serine 492 and serine 539 each carry phosphoserine. A Phosphothreonine modification is found at threonine 543. Position 569 is a phosphoserine (serine 569). A disordered region spans residues 571-597 (EEEELLGSSGGPPPEEPPKEGNPAEIN). Phosphothreonine is present on threonine 670. A Phosphoserine modification is found at serine 678. Omega-N-methylarginine is present on residues arginine 832, arginine 839, and arginine 849. Positions 834 to 853 (NYDAFRGQGGYPGKPRNRMV) are disordered.

The protein belongs to the ARS2 family. As to quaternary structure, interacts with CASP8AP2 and ERBB4. Interacts with NCBP1/CBP80 and DROSHA. Interacts with LUZP4. Interacts with NCBP2/CBP20 and NCBP3. Interacts with MTREX. Widely expressed, with a preference for proliferating cells. Highly expressed in hematopoietic tissues and reduced or absent expression in parenchymal organs like liver and kidney. In the brain, expressed in the subventricular zone by niche astrocytes, ependymal cells and neural stem cells. In this cerebral context, expressed in slowly dividing cells.

The protein resides in the nucleus. The protein localises to the nucleoplasm. It localises to the cytoplasm. In terms of biological role, acts as a mediator between the cap-binding complex (CBC) and the primary microRNAs (miRNAs) processing machinery during cell proliferation. Contributes to the stability and delivery of capped primary miRNA transcripts to the primary miRNA processing complex containing DGCR8 and DROSHA, thereby playing a role in RNA-mediated gene silencing (RNAi) by miRNAs. Binds capped RNAs (m7GpppG-capped RNA); however interaction is probably mediated via its interaction with NCBP1/CBP80 component of the CBC complex. Involved in cell cycle progression at S phase. Does not directly confer arsenite resistance but rather modulates arsenic sensitivity. Independently of its activity on miRNAs, necessary and sufficient to promote neural stem cell self-renewal. Does so by directly binding SOX2 promoter and positively regulating its transcription. The polypeptide is Serrate RNA effector molecule homolog (Srrt) (Mus musculus (Mouse)).